Reading from the N-terminus, the 249-residue chain is Triosephosphate isomerase (249 aa).

A substrate-binding site is contributed by 9–11 (NWK). Residue histidine 94 is the Electrophile of the active site. The Proton acceptor role is filled by glutamate 166. Substrate-binding positions include glycine 172 and 232 to 233 (GG).

This sequence belongs to the triosephosphate isomerase family. In terms of assembly, homodimer.

The protein resides in the cytoplasm. It catalyses the reaction D-glyceraldehyde 3-phosphate = dihydroxyacetone phosphate. It participates in carbohydrate biosynthesis; gluconeogenesis. It functions in the pathway carbohydrate degradation; glycolysis; D-glyceraldehyde 3-phosphate from glycerone phosphate: step 1/1. Its function is as follows. Involved in the gluconeogenesis. Catalyzes stereospecifically the conversion of dihydroxyacetone phosphate (DHAP) to D-glyceraldehyde-3-phosphate (G3P). This is Triosephosphate isomerase from Xylella fastidiosa (strain M23).